Reading from the N-terminus, the 525-residue chain is Glutamyl-tRNA(Gln) amidotransferase subunit A, mitochondrial (525 aa).

Active-site charge relay system residues include Lys-76 and Ser-168. Catalysis depends on Ser-192, which acts as the Acyl-ester intermediate.

The protein belongs to the amidase family. GatA subfamily. Subunit of the heterotrimeric GatCAB amidotransferase (AdT) complex, composed of A (QRSL1), B (GATB) and C (GATC) subunits.

Its subcellular location is the mitochondrion. The enzyme catalyses L-glutamyl-tRNA(Gln) + L-glutamine + ATP + H2O = L-glutaminyl-tRNA(Gln) + L-glutamate + ADP + phosphate + H(+). Allows the formation of correctly charged Gln-tRNA(Gln) through the transamidation of misacylated Glu-tRNA(Gln) in the mitochondria. The reaction takes place in the presence of glutamine and ATP through an activated gamma-phospho-Glu-tRNA(Gln). The polypeptide is Glutamyl-tRNA(Gln) amidotransferase subunit A, mitochondrial (Qrsl1) (Mus musculus (Mouse)).